Here is a 233-residue protein sequence, read N- to C-terminus: Putative N-acetylmuramoyl-L-alanine amidase (233 aa).

The MurNAc-LAA domain maps to 1-219 (MIDPGHGGQD…IANAIYIALK (219 aa)).

The protein belongs to the N-acetylmuramoyl-L-alanine amidase 3 family.

The protein resides in the secreted. It carries out the reaction Hydrolyzes the link between N-acetylmuramoyl residues and L-amino acid residues in certain cell-wall glycopeptides.. Cell-wall hydrolase involved in septum cleavage during cell division. The sequence is that of Putative N-acetylmuramoyl-L-alanine amidase (amiB) from Buchnera aphidicola subsp. Schizaphis graminum (strain Sg).